Consider the following 255-residue polypeptide: NAD(P)H-quinone oxidoreductase subunit K, chloroplastic (255 aa).

[4Fe-4S] cluster-binding residues include Cys47, Cys48, Cys112, and Cys143.

Belongs to the complex I 20 kDa subunit family. NDH is composed of at least 16 different subunits, 5 of which are encoded in the nucleus. Requires [4Fe-4S] cluster as cofactor.

It is found in the plastid. It localises to the chloroplast thylakoid membrane. It catalyses the reaction a plastoquinone + NADH + (n+1) H(+)(in) = a plastoquinol + NAD(+) + n H(+)(out). The enzyme catalyses a plastoquinone + NADPH + (n+1) H(+)(in) = a plastoquinol + NADP(+) + n H(+)(out). NDH shuttles electrons from NAD(P)H:plastoquinone, via FMN and iron-sulfur (Fe-S) centers, to quinones in the photosynthetic chain and possibly in a chloroplast respiratory chain. The immediate electron acceptor for the enzyme in this species is believed to be plastoquinone. Couples the redox reaction to proton translocation, and thus conserves the redox energy in a proton gradient. The sequence is that of NAD(P)H-quinone oxidoreductase subunit K, chloroplastic from Zygnema circumcarinatum (Green alga).